Consider the following 184-residue polypeptide: Dual-action ribosomal maturation protein DarP (184 aa).

Residues 1–27 form a disordered region; sequence MSIPDTEIPVDDDGYDENGYDRPSKSQ. Acidic residues predominate over residues 8–18; it reads IPVDDDGYDEN.

It belongs to the DarP family.

The protein localises to the cytoplasm. In terms of biological role, member of a network of 50S ribosomal subunit biogenesis factors which assembles along the 30S-50S interface, preventing incorrect 23S rRNA structures from forming. Promotes peptidyl transferase center (PTC) maturation. The sequence is that of Dual-action ribosomal maturation protein DarP from Bordetella avium (strain 197N).